The following is a 78-amino-acid chain: Antitoxin VapB27 (78 aa).

One can recognise a SpoVT-AbrB domain in the interval 1–45 (MKAVVDAAGRIVVPKPLREALGLQPGSTVEISRYGAGLHLIPTGR).

Belongs to the VapB family. As to quaternary structure, interacts with cognate toxin VapC27 and non-cognate toxins MazF6 and VapC40. Interaction with MazF6 and MazF9 partially neutralizes the toxins.

Antitoxin component of a type II toxin-antitoxin (TA) system. Cognate toxin is VapC27. Upon expression in E.coli partially counteracts the ribonuclease activity of non-cognate toxins MazF6 and MazF9. The protein is Antitoxin VapB27 (vapB27) of Mycobacterium tuberculosis (strain ATCC 25618 / H37Rv).